The chain runs to 349 residues: PDZ and LIM domain protein 2 (349 aa).

A PDZ domain is found at 1–84; it reads MALTVDVAGP…PLRLQLDRSQ (84 aa). The disordered stretch occupies residues 74–147; that stretch reads SPLRLQLDRS…TPPPTSPVAL (74 aa). The segment covering 81–94 has biased composition (polar residues); the sequence is DRSQTASPGQTNGE. Residues Ser124, Ser127, Ser129, Ser134, and Ser137 each carry the phosphoserine modification. Residues Thr138 and Thr142 each carry the phosphothreonine modification. Phosphoserine is present on residues Ser143 and Ser163. Positions 169–212 are disordered; the sequence is AHHLTYPGHPTSQQAGHSSPSDSAVRVLLHSPGRPSSPRFSSLD. Over residues 178-190 the composition is skewed to polar residues; that stretch reads PTSQQAGHSSPSD. Phosphoserine occurs at positions 199, 204, 205, 209, 210, and 263. The segment covering 199–210 has biased composition (low complexity); that stretch reads SPGRPSSPRFSS. Residues 281–341 enclose the LIM zinc-binding domain; it reads HTCEKCSVNI…EKHARQRYSM (61 aa).

In terms of assembly, interacts with alpha-actinins ACTN1 and ACTN4, FLNA and MYH9. Interacts (via LIM zinc-binding domain) with MKRN2. As to expression, highly expressed in lung. Expressed at intermediate level in kidney, testis and spleen. Weakly expressed in heart and brain.

The protein localises to the cytoplasm. It is found in the cytoskeleton. Its function is as follows. Probable adapter protein located at the actin cytoskeleton that promotes cell attachment. Necessary for the migratory capacity of epithelial cells. Overexpression enhances cell adhesion to collagen and fibronectin and suppresses anchorage independent growth. May contribute to tumor cell migratory capacity. The protein is PDZ and LIM domain protein 2 (Pdlim2) of Mus musculus (Mouse).